We begin with the raw amino-acid sequence, 231 residues long: FPTDDDDKIVGGYTCAANSIPYQVSLNSGSHFCGGSLINSQWVVSAAHCYKSRIQVRLGEHNIDVLEGNEQFINAAKIITHPNFNGNTLDNDIMLIKLSSPATLNSRVATVSLPRSCAAAGTECLISGWGNTKSSGSSYPSLLQCLKAPVLSDSSCKSSYPGQITGNMICVGFLEGGKDSCQGDSGGPVVCNGQLQGIVSWGYGCAQKNKPGVYTKVCNYVNWIQQTIAAN.

Positions 1-8 are cleaved as a propeptide — activation peptide; the sequence is FPTDDDDK. The 221-residue stretch at 9–229 folds into the Peptidase S1 domain; it reads IVGGYTCAAN…YVNWIQQTIA (221 aa). 6 cysteine pairs are disulfide-bonded: Cys15-Cys145, Cys33-Cys49, Cys117-Cys218, Cys124-Cys191, Cys156-Cys170, and Cys181-Cys205. Catalysis depends on His48, which acts as the Charge relay system. Ca(2+) contacts are provided by Glu60, Asn62, Val65, and Glu70. The active-site Charge relay system is Asp92. Ser185 (charge relay system) is an active-site residue.

It belongs to the peptidase S1 family. Ca(2+) serves as cofactor.

The protein resides in the secreted. Its subcellular location is the extracellular space. It carries out the reaction Preferential cleavage: Arg-|-Xaa, Lys-|-Xaa.. In Sus scrofa (Pig), this protein is Trypsin.